We begin with the raw amino-acid sequence, 241 residues long: Proteasome subunit alpha (241 aa).

Belongs to the peptidase T1A family. In terms of assembly, the 20S proteasome core is composed of 14 alpha and 14 beta subunits that assemble into four stacked heptameric rings, resulting in a barrel-shaped structure. The two inner rings, each composed of seven catalytic beta subunits, are sandwiched by two outer rings, each composed of seven alpha subunits. The catalytic chamber with the active sites is on the inside of the barrel. Has a gated structure, the ends of the cylinder being occluded by the N-termini of the alpha-subunits. Is capped by the proteasome-associated ATPase, ARC.

The protein localises to the cytoplasm. It functions in the pathway protein degradation; proteasomal Pup-dependent pathway. With respect to regulation, the formation of the proteasomal ATPase ARC-20S proteasome complex, likely via the docking of the C-termini of ARC into the intersubunit pockets in the alpha-rings, may trigger opening of the gate for substrate entry. Interconversion between the open-gate and close-gate conformations leads to a dynamic regulation of the 20S proteasome proteolysis activity. Its function is as follows. Component of the proteasome core, a large protease complex with broad specificity involved in protein degradation. The sequence is that of Proteasome subunit alpha from Frankia alni (strain DSM 45986 / CECT 9034 / ACN14a).